Here is a 399-residue protein sequence, read N- to C-terminus: MGLSWTVPLEWGKNLSASNPLGFLPDHQLDPAFRANTNNPDWDFNPKKDPWPEANKVGVGAYGPGFTPPHGGLLGWSPQSQGTLTTLPADPPPASTNRQSGRQPTPISPPLRDSHPQAMQWNSTAFHQALQNPKVRGLYFPAGGSSSGIVNPVPTIASHISSIFSRIGDPAPNMENITSGFLGPLLVLQAGFFLLTRILTIPQSLDSWWTSLNFLGGVPVCPGLNSQSPTSNHSPISCPPTCPGYRWMCLRRFIIFLFILLLCLIFLLVLLDYQGMLPVCPLIPGSSTTSTGPCKTCTTPAQGNSMYPSCCCTKPSDGNCTCIPIPSSWAFAKYLWEWASVRFSWLSLLVPFVQWFVGLSPTVWLSAIWMMWYWGPNLYNILSPFIPLLPIFFCLWVYI.

M1 carries the N-acetylmethionine modification. G2 is lipidated: N-myristoyl glycine; by host. The interval 2–118 (GLSWTVPLEW…PPLRDSHPQA (117 aa)) is pre-S1. The segment at 2–173 (GLSWTVPLEW…FSRIGDPAPN (172 aa)) is pre-S. Topologically, residues 2–180 (GLSWTVPLEW…APNMENITSG (179 aa)) are virion surface; in external conformation. At 2-252 (GLSWTVPLEW…PGYRWMCLRR (251 aa)) the chain is on the intravirion; in internal conformation side. S4 carries an N-linked (GlcNAc...) asparagine glycan. Residues 69–117 (PHGGLLGWSPQSQGTLTTLPADPPPASTNRQSGRQPTPISPPLRDSHPQ) form a disordered region. The pre-S2 stretch occupies residues 119–173 (MQWNSTAFHQALQNPKVRGLYFPAGGSSSGIVNPVPTIASHISSIFSRIGDPAPN). A helical membrane pass occupies residues 181–201 (FLGPLLVLQAGFFLLTRILTI). Over 202–252 (PQSLDSWWTSLNFLGGVPVCPGLNSQSPTSNHSPISCPPTCPGYRWMCLRR) the chain is Intravirion; in external conformation. A helical transmembrane segment spans residues 253 to 273 (FIIFLFILLLCLIFLLVLLDY). At 274–347 (QGMLPVCPLI…WASVRFSWLS (74 aa)) the chain is on the virion surface side. A glycan (N-linked (GlcNAc...) asparagine; by host) is linked at N319. A helical membrane pass occupies residues 348-368 (LLVPFVQWFVGLSPTVWLSAI). Topologically, residues 369-374 (WMMWYW) are intravirion. A helical membrane pass occupies residues 375 to 397 (GPNLYNILSPFIPLLPIFFCLWV). Residues 398 to 399 (YI) are Virion surface-facing.

The protein belongs to the orthohepadnavirus major surface antigen family. As to quaternary structure, in its internal form (Li-HBsAg), interacts with the capsid protein and with the isoform S. Interacts with host chaperone CANX. In terms of assembly, associates with host chaperone CANX through its pre-S2 N glycan; this association may be essential for isoform M proper secretion. Interacts with isoform L. Interacts with the antigens of satellite virus HDV (HDVAgs); this interaction is required for encapsidation of HDV genomic RNA. Isoform M is N-terminally acetylated by host at a ratio of 90%, and N-glycosylated by host at the pre-S2 region. Post-translationally, myristoylated.

It localises to the virion membrane. Functionally, the large envelope protein exists in two topological conformations, one which is termed 'external' or Le-HBsAg and the other 'internal' or Li-HBsAg. In its external conformation the protein attaches the virus to cell receptors and thereby initiating infection. This interaction determines the species specificity and liver tropism. This attachment induces virion internalization predominantly through caveolin-mediated endocytosis. The large envelope protein also assures fusion between virion membrane and endosomal membrane. In its internal conformation the protein plays a role in virion morphogenesis and mediates the contact with the nucleocapsid like a matrix protein. The middle envelope protein plays an important role in the budding of the virion. It is involved in the induction of budding in a nucleocapsid independent way. In this process the majority of envelope proteins bud to form subviral lipoprotein particles of 22 nm of diameter that do not contain a nucleocapsid. The sequence is that of Large envelope protein from Hepatitis B virus genotype G (isolate IG29227/2000) (HBV-G).